The following is a 368-amino-acid chain: tRNA-specific 2-thiouridylase MnmA (368 aa).

ATP is bound by residues 12–19 (AMSGGVDS) and Met-38. Residues 98-100 (NPD) are interaction with target base in tRNA. Catalysis depends on Cys-103, which acts as the Nucleophile. An intrachain disulfide couples Cys-103 to Cys-200. Gly-128 provides a ligand contact to ATP. Residues 150 to 152 (KDQ) form an interaction with tRNA region. Cys-200 functions as the Cysteine persulfide intermediate in the catalytic mechanism. An interaction with tRNA region spans residues 312-313 (RY).

This sequence belongs to the MnmA/TRMU family. As to quaternary structure, interacts with TusE.

It is found in the cytoplasm. It catalyses the reaction S-sulfanyl-L-cysteinyl-[protein] + uridine(34) in tRNA + AH2 + ATP = 2-thiouridine(34) in tRNA + L-cysteinyl-[protein] + A + AMP + diphosphate + H(+). Functionally, catalyzes the 2-thiolation of uridine at the wobble position (U34) of tRNA(Lys), tRNA(Glu) and tRNA(Gln), leading to the formation of s(2)U34, the first step of tRNA-mnm(5)s(2)U34 synthesis. Sulfur is provided by IscS, via a sulfur-relay system. Binds ATP and its substrate tRNAs. The polypeptide is tRNA-specific 2-thiouridylase MnmA (Buchnera aphidicola subsp. Acyrthosiphon pisum (strain APS) (Acyrthosiphon pisum symbiotic bacterium)).